The chain runs to 341 residues: Ferrochelatase (341 aa).

Positions 196 and 277 each coordinate Fe cation.

This sequence belongs to the ferrochelatase family.

It is found in the cytoplasm. The enzyme catalyses heme b + 2 H(+) = protoporphyrin IX + Fe(2+). Its pathway is porphyrin-containing compound metabolism; protoheme biosynthesis; protoheme from protoporphyrin-IX: step 1/1. Its function is as follows. Catalyzes the ferrous insertion into protoporphyrin IX. In Synechococcus sp. (strain JA-3-3Ab) (Cyanobacteria bacterium Yellowstone A-Prime), this protein is Ferrochelatase.